We begin with the raw amino-acid sequence, 328 residues long: Cytosolic Fe-S cluster assembly factor NBP35 (328 aa).

4 residues coordinate [4Fe-4S] cluster: C27, C41, C44, and C50. Position 80–87 (80–87 (GKGGVGKS)) interacts with ATP. Positions 253 and 256 each coordinate [4Fe-4S] cluster.

It belongs to the Mrp/NBP35 ATP-binding proteins family. NUBP1/NBP35 subfamily. Heterotetramer of 2 NBP35 and 2 CFD1 chains. Requires [4Fe-4S] cluster as cofactor.

The protein resides in the cytoplasm. The protein localises to the nucleus. Its function is as follows. Component of the cytosolic iron-sulfur (Fe/S) protein assembly (CIA) machinery. Required for maturation of extramitochondrial Fe-S proteins. The NBP35-CFD1 heterotetramer forms a Fe-S scaffold complex, mediating the de novo assembly of an Fe-S cluster and its transfer to target apoproteins. Required for biogenesis and export of both ribosomal subunits, which may reflect a role in assembly of the Fe/S clusters in RLI1, a protein which performs rRNA processing and ribosome export. The sequence is that of Cytosolic Fe-S cluster assembly factor NBP35 from Saccharomyces cerevisiae (strain ATCC 204508 / S288c) (Baker's yeast).